The sequence spans 97 residues: Large ribosomal subunit protein uL30m (97 aa).

The protein belongs to the universal ribosomal protein uL30 family. In terms of assembly, component of the mitochondrial large ribosomal subunit (mt-LSU). Mature yeast 74S mitochondrial ribosomes consist of a small (37S) and a large (54S) subunit. The 37S small subunit contains a 15S ribosomal RNA (15S mt-rRNA) and at least 32 different proteins. The 54S large subunit contains a 21S rRNA (21S mt-rRNA) and at least 45 different proteins.

It localises to the mitochondrion. Its function is as follows. Component of the mitochondrial ribosome (mitoribosome), a dedicated translation machinery responsible for the synthesis of mitochondrial genome-encoded proteins, including at least some of the essential transmembrane subunits of the mitochondrial respiratory chain. The mitoribosomes are attached to the mitochondrial inner membrane and translation products are cotranslationally integrated into the membrane. In Schizosaccharomyces pombe (strain 972 / ATCC 24843) (Fission yeast), this protein is Large ribosomal subunit protein uL30m (mrpl33).